The primary structure comprises 101 residues: NADH-quinone oxidoreductase subunit K (101 aa).

The next 3 membrane-spanning stretches (helical) occupy residues 4-24 (LSHYLILGSLLFAISVVGIFL), 30-50 (IVLLMAIELMLLAVNLNFIAF), and 61-81 (VFVFFILTVAAAESAIGLAIL).

The protein belongs to the complex I subunit 4L family. NDH-1 is composed of 14 different subunits. Subunits NuoA, H, J, K, L, M, N constitute the membrane sector of the complex.

The protein resides in the cell inner membrane. The catalysed reaction is a quinone + NADH + 5 H(+)(in) = a quinol + NAD(+) + 4 H(+)(out). In terms of biological role, NDH-1 shuttles electrons from NADH, via FMN and iron-sulfur (Fe-S) centers, to quinones in the respiratory chain. The immediate electron acceptor for the enzyme in this species is believed to be ubiquinone. Couples the redox reaction to proton translocation (for every two electrons transferred, four hydrogen ions are translocated across the cytoplasmic membrane), and thus conserves the redox energy in a proton gradient. The polypeptide is NADH-quinone oxidoreductase subunit K (Methylovorus glucosotrophus (strain SIP3-4)).